The primary structure comprises 84 residues: Putative membrane protein insertion efficiency factor (84 aa).

The protein belongs to the UPF0161 family.

Its subcellular location is the cell inner membrane. In terms of biological role, could be involved in insertion of integral membrane proteins into the membrane. The sequence is that of Putative membrane protein insertion efficiency factor from Shewanella amazonensis (strain ATCC BAA-1098 / SB2B).